The primary structure comprises 176 residues: Peptide deformylase 2 (176 aa).

Fe cation contacts are provided by cysteine 99 and histidine 141. Glutamate 142 is an active-site residue. Residue histidine 145 participates in Fe cation binding.

Belongs to the polypeptide deformylase family. Requires Fe(2+) as cofactor.

It carries out the reaction N-terminal N-formyl-L-methionyl-[peptide] + H2O = N-terminal L-methionyl-[peptide] + formate. Functionally, removes the formyl group from the N-terminal Met of newly synthesized proteins. Requires at least a dipeptide for an efficient rate of reaction. N-terminal L-methionine is a prerequisite for activity but the enzyme has broad specificity at other positions. The sequence is that of Peptide deformylase 2 from Bordetella bronchiseptica (strain ATCC BAA-588 / NCTC 13252 / RB50) (Alcaligenes bronchisepticus).